We begin with the raw amino-acid sequence, 213 residues long: Protein Syd (213 aa).

This sequence belongs to the Syd family.

Its subcellular location is the cell inner membrane. Interacts with the SecY protein in vivo. May bind preferentially to an uncomplexed state of SecY, thus functioning either as a chelating agent for excess SecY in the cell or as a regulatory factor that negatively controls the translocase function. This is Protein Syd from Shewanella halifaxensis (strain HAW-EB4).